Here is a 338-residue protein sequence, read N- to C-terminus: Anthranilate phosphoribosyltransferase (338 aa).

Residues Gly-81, 84-85 (GD), Thr-89, 91-94 (NIST), 109-117 (KHGNRAVSS), and Ser-121 contribute to the 5-phospho-alpha-D-ribose 1-diphosphate site. Anthranilate is bound at residue Gly-81. Residue Ser-93 participates in Mg(2+) binding. Position 112 (Asn-112) interacts with anthranilate. An anthranilate-binding site is contributed by Arg-167. Mg(2+) is bound by residues Asp-226 and Glu-227.

Belongs to the anthranilate phosphoribosyltransferase family. Homodimer. Mg(2+) is required as a cofactor.

It catalyses the reaction N-(5-phospho-beta-D-ribosyl)anthranilate + diphosphate = 5-phospho-alpha-D-ribose 1-diphosphate + anthranilate. It participates in amino-acid biosynthesis; L-tryptophan biosynthesis; L-tryptophan from chorismate: step 2/5. Its function is as follows. Catalyzes the transfer of the phosphoribosyl group of 5-phosphorylribose-1-pyrophosphate (PRPP) to anthranilate to yield N-(5'-phosphoribosyl)-anthranilate (PRA). In Myxococcus xanthus (strain DK1622), this protein is Anthranilate phosphoribosyltransferase.